Reading from the N-terminus, the 324-residue chain is Phospho-N-acetylmuramoyl-pentapeptide-transferase (324 aa).

The next 10 helical transmembrane spans lie at 5 to 25, 55 to 75, 81 to 101, 122 to 142, 147 to 167, 176 to 196, 203 to 223, 227 to 247, 250 to 270, and 302 to 322; these read VILFTAGLAFIITVVLSPIFI, GGLMILLSLSITTWLMSDIFF, TYMLLFVTVGYGLLGFIDDFI, LIALIFYFFFQHYSMSTVVSI, VSLDLGVAYVLLIIFMLVGGS, LDGLLAGTAAIAFGAYAVLAW, VAIFSVAVVGAVLGFLVFNAH, VFMGDTGSLALGGAIVTIAIL, LEILLVIIGGVFVIETLSVII, and VVVTFWAVGLLFAILGIYIEV.

Belongs to the glycosyltransferase 4 family. MraY subfamily. Mg(2+) is required as a cofactor.

The protein resides in the cell membrane. It carries out the reaction UDP-N-acetyl-alpha-D-muramoyl-L-alanyl-gamma-D-glutamyl-meso-2,6-diaminopimeloyl-D-alanyl-D-alanine + di-trans,octa-cis-undecaprenyl phosphate = di-trans,octa-cis-undecaprenyl diphospho-N-acetyl-alpha-D-muramoyl-L-alanyl-D-glutamyl-meso-2,6-diaminopimeloyl-D-alanyl-D-alanine + UMP. The protein operates within cell wall biogenesis; peptidoglycan biosynthesis. Functionally, catalyzes the initial step of the lipid cycle reactions in the biosynthesis of the cell wall peptidoglycan: transfers peptidoglycan precursor phospho-MurNAc-pentapeptide from UDP-MurNAc-pentapeptide onto the lipid carrier undecaprenyl phosphate, yielding undecaprenyl-pyrophosphoryl-MurNAc-pentapeptide, known as lipid I. The sequence is that of Phospho-N-acetylmuramoyl-pentapeptide-transferase from Anoxybacillus flavithermus (strain DSM 21510 / WK1).